We begin with the raw amino-acid sequence, 277 residues long: Phosphonates import ATP-binding protein PhnC 2 (277 aa).

An ABC transporter domain is found at 5–253; the sequence is IHVQGLNKTF…FLNDLYGADA (249 aa). 37-44 contacts ATP; the sequence is GASGSGKS.

This sequence belongs to the ABC transporter superfamily. Phosphonates importer (TC 3.A.1.9.1) family. As to quaternary structure, the complex is composed of two ATP-binding proteins (PhnC), two transmembrane proteins (PhnE) and a solute-binding protein (PhnD).

The protein localises to the cell inner membrane. It carries out the reaction phosphonate(out) + ATP + H2O = phosphonate(in) + ADP + phosphate + H(+). Its function is as follows. Part of the ABC transporter complex PhnCDE involved in phosphonates import. Responsible for energy coupling to the transport system. This is Phosphonates import ATP-binding protein PhnC 2 from Pseudomonas savastanoi pv. phaseolicola (strain 1448A / Race 6) (Pseudomonas syringae pv. phaseolicola (strain 1448A / Race 6)).